The chain runs to 161 residues: Putative defense protein 2 (161 aa).

Residues 1 to 11 (LSWSALALTSA) form the signal peptide. A Reelin domain is found at 12–161 (YPTGAPTSAC…SAPVKILSHH (150 aa)). A disulfide bond links cysteine 21 and cysteine 98. N-linked (GlcNAc...) asparagine glycosylation occurs at asparagine 91.

It belongs to the insect defense protein family.

Its subcellular location is the secreted. Functionally, may have antimicrobial activity. The protein is Putative defense protein 2 of Antheraea mylitta (Tasar silkworm).